A 465-amino-acid polypeptide reads, in one-letter code: Adenosylhomocysteinase (465 aa).

Residues Thr56, Asp131, and Glu191 each contribute to the substrate site. 192–194 (TTT) contributes to the NAD(+) binding site. Substrate-binding residues include Lys221 and Asp225. NAD(+)-binding positions include Asn226, 255-260 (GYGNVG), Glu278, Asn313, 334-336 (IGH), and Asn379.

The protein belongs to the adenosylhomocysteinase family. NAD(+) is required as a cofactor.

The protein resides in the cytoplasm. It catalyses the reaction S-adenosyl-L-homocysteine + H2O = L-homocysteine + adenosine. The protein operates within amino-acid biosynthesis; L-homocysteine biosynthesis; L-homocysteine from S-adenosyl-L-homocysteine: step 1/1. May play a key role in the regulation of the intracellular concentration of adenosylhomocysteine. This is Adenosylhomocysteinase from Bartonella quintana (strain Toulouse) (Rochalimaea quintana).